The primary structure comprises 246 residues: Large ribosomal subunit protein uL2 (246 aa).

Positions 196 to 226 (MSPYAHPHGGGSHQKGGTPVPKTAPPGQKVG) are disordered.

The protein belongs to the universal ribosomal protein uL2 family. As to quaternary structure, part of the 50S ribosomal subunit. Forms a bridge to the 30S subunit in the 70S ribosome.

Functionally, one of the primary rRNA binding proteins. Required for association of the 30S and 50S subunits to form the 70S ribosome, for tRNA binding and peptide bond formation. It has been suggested to have peptidyltransferase activity; this is somewhat controversial. Makes several contacts with the 16S rRNA in the 70S ribosome. This Pyrobaculum arsenaticum (strain DSM 13514 / JCM 11321 / PZ6) protein is Large ribosomal subunit protein uL2.